The following is a 384-amino-acid chain: Cobalt-precorrin-5B C(1)-methyltransferase (384 aa).

The protein belongs to the CbiD family.

The enzyme catalyses Co-precorrin-5B + S-adenosyl-L-methionine = Co-precorrin-6A + S-adenosyl-L-homocysteine. The protein operates within cofactor biosynthesis; adenosylcobalamin biosynthesis; cob(II)yrinate a,c-diamide from sirohydrochlorin (anaerobic route): step 6/10. Functionally, catalyzes the methylation of C-1 in cobalt-precorrin-5B to form cobalt-precorrin-6A. The chain is Cobalt-precorrin-5B C(1)-methyltransferase from Ruminiclostridium cellulolyticum (strain ATCC 35319 / DSM 5812 / JCM 6584 / H10) (Clostridium cellulolyticum).